We begin with the raw amino-acid sequence, 348 residues long: Sulfate/thiosulfate import ATP-binding protein CysA (348 aa).

Residues 3-237 (IRIQELRKQF…PSSPFVYSFV (235 aa)) enclose the ABC transporter domain. 35-42 (GPSGSGKT) contacts ATP.

Belongs to the ABC transporter superfamily. Sulfate/tungstate importer (TC 3.A.1.6) family. In terms of assembly, the complex is composed of two ATP-binding proteins (CysA), two transmembrane proteins (CysT and CysW) and a solute-binding protein (CysP).

It localises to the cell inner membrane. It carries out the reaction sulfate(out) + ATP + H2O = sulfate(in) + ADP + phosphate + H(+). The enzyme catalyses thiosulfate(out) + ATP + H2O = thiosulfate(in) + ADP + phosphate + H(+). Functionally, part of the ABC transporter complex CysAWTP involved in sulfate/thiosulfate import. Responsible for energy coupling to the transport system. The chain is Sulfate/thiosulfate import ATP-binding protein CysA from Xylella fastidiosa (strain Temecula1 / ATCC 700964).